An 807-amino-acid chain; its full sequence is uncharacterized protein (807 aa).

Residues 1 to 18 form the signal peptide; sequence MNTVLFVILLAAIGSNHG. Topologically, residues 19–704 are extracellular; it reads LIDERLTVNR…GLFTDIFGGE (686 aa). The segment covering 133 to 142 has biased composition (polar residues); sequence TTTTAAPQTG. A disordered region spans residues 133–171; sequence TTTTAAPQTGNRRRRRAAGDEPNTDDNTPPNLEIPDWLD. Asparagine 277 and asparagine 660 each carry an N-linked (GlcNAc...) asparagine; by host glycan. Residues 705-725 form a helical membrane-spanning segment; sequence VWAVIAAIFSPVFLTAFALII. At 726-807 the chain is on the cytoplasmic side; that stretch reads SLINFIPAVR…GERQVISRTN (82 aa).

It localises to the host membrane. This is an uncharacterized protein from Magallana gigas (Pacific oyster).